The chain runs to 636 residues: DNA-directed RNA polymerase subunit beta' (636 aa).

Residues cysteine 70, cysteine 72, cysteine 85, and cysteine 88 each coordinate Zn(2+). Mg(2+)-binding residues include aspartate 471, aspartate 473, and aspartate 475.

Belongs to the RNA polymerase beta' chain family. RpoC1 subfamily. Mg(2+) serves as cofactor. Requires Zn(2+) as cofactor.

Its subcellular location is the plastid. It localises to the cyanelle. It carries out the reaction RNA(n) + a ribonucleoside 5'-triphosphate = RNA(n+1) + diphosphate. DNA-dependent RNA polymerase catalyzes the transcription of DNA into RNA using the four ribonucleoside triphosphates as substrates. The chain is DNA-directed RNA polymerase subunit beta' from Cyanophora paradoxa.